Reading from the N-terminus, the 160-residue chain is Ribosomal RNA large subunit methyltransferase H (160 aa).

S-adenosyl-L-methionine is bound by residues L76 and G108.

Belongs to the RNA methyltransferase RlmH family. In terms of assembly, homodimer.

The protein localises to the cytoplasm. It carries out the reaction pseudouridine(1915) in 23S rRNA + S-adenosyl-L-methionine = N(3)-methylpseudouridine(1915) in 23S rRNA + S-adenosyl-L-homocysteine + H(+). Its function is as follows. Specifically methylates the pseudouridine at position 1915 (m3Psi1915) in 23S rRNA. The chain is Ribosomal RNA large subunit methyltransferase H from Rhodopseudomonas palustris (strain ATCC BAA-98 / CGA009).